Here is a 235-residue protein sequence, read N- to C-terminus: CMP-N,N'-diacetyllegionaminic acid synthase (235 aa).

Belongs to the CMP-NeuNAc synthase family.

The catalysed reaction is N,N-diacetyllegionaminate + CTP = CMP-N,N-diacetyllegionaminate + diphosphate. Functionally, involved in biosynthesis of legionaminic acid (5,7-diamino-3,5,7,9-tetradeoxy-D-glycero-D-galacto-non-2-ulosonic acid)(Leg), a sialic acid-like derivative that is incorporated into flagellin via O-linkage to Ser/Thr. Catalyzes the conversion of N,N'-diacetyllegionaminic acid (Leg5Ac7Ac) and CTP into CMP-N,N'-diacetyllegionaminic acid (CMP-Leg5Ac7Ac). In Campylobacter jejuni subsp. jejuni serotype O:2 (strain ATCC 700819 / NCTC 11168), this protein is CMP-N,N'-diacetyllegionaminic acid synthase (legF).